We begin with the raw amino-acid sequence, 156 residues long: Small ribosomal subunit protein uS7 (156 aa).

This sequence belongs to the universal ribosomal protein uS7 family. Part of the 30S ribosomal subunit. Contacts proteins S9 and S11.

Functionally, one of the primary rRNA binding proteins, it binds directly to 16S rRNA where it nucleates assembly of the head domain of the 30S subunit. Is located at the subunit interface close to the decoding center, probably blocks exit of the E-site tRNA. This Mycoplasmopsis pulmonis (strain UAB CTIP) (Mycoplasma pulmonis) protein is Small ribosomal subunit protein uS7.